The chain runs to 291 residues: 4-hydroxy-tetrahydrodipicolinate synthase (291 aa).

Thr45 serves as a coordination point for pyruvate. The active-site Proton donor/acceptor is the Tyr131. The active-site Schiff-base intermediate with substrate is the Lys159. Ile202 is a pyruvate binding site.

Belongs to the DapA family. In terms of assembly, homotetramer; dimer of dimers.

It is found in the cytoplasm. It carries out the reaction L-aspartate 4-semialdehyde + pyruvate = (2S,4S)-4-hydroxy-2,3,4,5-tetrahydrodipicolinate + H2O + H(+). The protein operates within amino-acid biosynthesis; L-lysine biosynthesis via DAP pathway; (S)-tetrahydrodipicolinate from L-aspartate: step 3/4. Catalyzes the condensation of (S)-aspartate-beta-semialdehyde [(S)-ASA] and pyruvate to 4-hydroxy-tetrahydrodipicolinate (HTPA). This is 4-hydroxy-tetrahydrodipicolinate synthase from Methanosarcina barkeri (strain Fusaro / DSM 804).